An 857-amino-acid polypeptide reads, in one-letter code: MMVRLSPLMEQYSRIKQQCPDALLLFRVGDFYETFGEDAITTSRTLNITLTSRQKDDEGNRIPLAGIPYHSLDVYLSRLVNAGHKVAICEQVEDPKQAKGIVRREITRIVTPGTVIEPALLQERSNNYLAAVLLENGLAGLSLLDLSTGDFIASEVPVERLGSELARFSPAECLAPPGVSLEGMKFQNLDAELFSLNEASESGGILGDLHKRSPLCARAACAILSYLRETRIQSVDHIKPIRMISSSEYMLLDEITLRNLEIFRNLRDGSRSGTLMEILDETVTPMGSRTLARWLQMPSMSLEVIRRRQDAIEEMVRRAVIREEISELLDGLSDLERIIGRVSLGNAGPKDLVALRSSLRRIPEIAHAMSALESEYLVEIRKRLDASELDDLVVLLERALSDDPPTSPRDGGVIRDGYSPELDEIRSALRNGRSWIAELESSERKRTGIKSLKVGYNNVFGYYIEVTKPNLSMVPDDYIRKQTLSNAERFVTRELKEVESRVLSAQERSSALEYEVFLDLRGQVASRTRSVQEVAAAIGELDTILGLTRAALMGAMVRPVVDAGREVILRDSRHPVLDRVMKGGFVPNDLTMDESSWFMILTGPNMAGKSTFMRQVALIAIMAQIGSFVPASYAKIGLIDRIFTRVGARDDLVSGRSTFMVEMSELANILVSATKDSLILLDEIGRGTSTFDGLSIAWAVSEYIHSRIKAKTIFATHYHQLTQLNLPGIVNYSMAVKEEGRSITFLRTVVPGATNKSYGIHVARLAGVPEHVIRRAEELLDIIEEQAAIEIRKCRSKERPKRYTQLIFFNQPESIDNDILEEIKNLEPEKITPLQALNLLVEYRRRLGCKDAKDTHT.

ATP is bound at residue 603–610; the sequence is GPNMAGKS.

Belongs to the DNA mismatch repair MutS family.

Its function is as follows. This protein is involved in the repair of mismatches in DNA. It is possible that it carries out the mismatch recognition step. This protein has a weak ATPase activity. In Methanothrix thermoacetophila (strain DSM 6194 / JCM 14653 / NBRC 101360 / PT) (Methanosaeta thermophila), this protein is DNA mismatch repair protein MutS.